Reading from the N-terminus, the 81-residue chain is ATP synthase subunit c (81 aa).

A run of 2 helical transmembrane segments spans residues 14 to 34 and 60 to 80; these read YLGA…IGTV and LAFA…LLFV.

This sequence belongs to the ATPase C chain family. F-type ATPases have 2 components, F(1) - the catalytic core - and F(0) - the membrane proton channel. F(1) has five subunits: alpha(3), beta(3), gamma(1), delta(1), epsilon(1). F(0) has three main subunits: a(1), b(2) and c(10-14). The alpha and beta chains form an alternating ring which encloses part of the gamma chain. F(1) is attached to F(0) by a central stalk formed by the gamma and epsilon chains, while a peripheral stalk is formed by the delta and b chains.

The protein localises to the cell membrane. F(1)F(0) ATP synthase produces ATP from ADP in the presence of a proton or sodium gradient. F-type ATPases consist of two structural domains, F(1) containing the extramembraneous catalytic core and F(0) containing the membrane proton channel, linked together by a central stalk and a peripheral stalk. During catalysis, ATP synthesis in the catalytic domain of F(1) is coupled via a rotary mechanism of the central stalk subunits to proton translocation. Functionally, key component of the F(0) channel; it plays a direct role in translocation across the membrane. A homomeric c-ring of between 10-14 subunits forms the central stalk rotor element with the F(1) delta and epsilon subunits. This Clostridium acetobutylicum (strain ATCC 824 / DSM 792 / JCM 1419 / IAM 19013 / LMG 5710 / NBRC 13948 / NRRL B-527 / VKM B-1787 / 2291 / W) protein is ATP synthase subunit c.